The primary structure comprises 527 residues: MMNEKQRLQYTAQIETDHPTDKKSALDENLQRLKQKTSQDYEKYFSTVFVPPSLKEAKKRGKEEVKYHKDFSIPEEFRGMGNGRKFYIRTYGCQMNEHDTEVMAGIFMALGYEPTDRPEDANVILLNTCAIRENAENKVFGEIGHLKPLKQNNPDLLLGVCGCMSQEESVVNKILKQFQYVDMIFGTHNIHRLPYILKEAYMSKEMVVEVWSKEGDVIENLPKVRKGNIKAWVNIMYGCDKFCTYCIVPYTRGKERSRRPEDIIQEVRHLAAQGYKEITLLGQNVNAYGKDFTDMKYGLGDLMDELRKIDIPRIRFTTSHPRDFDDRLIEVLAKGGNLVEHIHLPVQSGSSEVLKMMARKYTREQYLELVRKIKEAIPGVALTTDIIVGFPNETDEQFEETLSLYREVEFDSAFTFIYSPREGTPAAKMVDNVPMEVKKERLQRLNALVNEISAKKMKEYEGQVVEVLVEGESKNNPDVLAGYTRKNKLVNFVGPKSAIGQLVNVRITEAKTWTLNGEMVEETIEVK.

The tract at residues 1–27 is disordered; that stretch reads MMNEKQRLQYTAQIETDHPTDKKSALD. A compositionally biased stretch (basic and acidic residues) spans 15 to 27; sequence ETDHPTDKKSALD. The MTTase N-terminal domain maps to 84–202; it reads RKFYIRTYGC…LPYILKEAYM (119 aa). [4Fe-4S] cluster-binding residues include C93, C129, C163, C239, C243, and C246. The Radical SAM core domain occupies 225–455; sequence RKGNIKAWVN…NALVNEISAK (231 aa). Positions 458-521 constitute a TRAM domain; sequence KEYEGQVVEV…TWTLNGEMVE (64 aa).

Belongs to the methylthiotransferase family. MiaB subfamily. In terms of assembly, monomer. The cofactor is [4Fe-4S] cluster.

It is found in the cytoplasm. It carries out the reaction N(6)-dimethylallyladenosine(37) in tRNA + (sulfur carrier)-SH + AH2 + 2 S-adenosyl-L-methionine = 2-methylsulfanyl-N(6)-dimethylallyladenosine(37) in tRNA + (sulfur carrier)-H + 5'-deoxyadenosine + L-methionine + A + S-adenosyl-L-homocysteine + 2 H(+). Its function is as follows. Catalyzes the methylthiolation of N6-(dimethylallyl)adenosine (i(6)A), leading to the formation of 2-methylthio-N6-(dimethylallyl)adenosine (ms(2)i(6)A) at position 37 in tRNAs that read codons beginning with uridine. This chain is tRNA-2-methylthio-N(6)-dimethylallyladenosine synthase, found in Anoxybacillus flavithermus (strain DSM 21510 / WK1).